Reading from the N-terminus, the 159-residue chain is 2-C-methyl-D-erythritol 2,4-cyclodiphosphate synthase (159 aa).

The a divalent metal cation site is built by aspartate 8 and histidine 10. Residues 8-10 and 34-35 each bind 4-CDP-2-C-methyl-D-erythritol 2-phosphate; these read DVH and HS. Histidine 42 contributes to the a divalent metal cation binding site. 4-CDP-2-C-methyl-D-erythritol 2-phosphate-binding positions include 56–58, 61–65, 100–106, 132–135, phenylalanine 139, and arginine 142; these read DIG, FPDTD, AQAPKML, and TTTE.

The protein belongs to the IspF family. In terms of assembly, homotrimer. The cofactor is a divalent metal cation.

The enzyme catalyses 4-CDP-2-C-methyl-D-erythritol 2-phosphate = 2-C-methyl-D-erythritol 2,4-cyclic diphosphate + CMP. Its pathway is isoprenoid biosynthesis; isopentenyl diphosphate biosynthesis via DXP pathway; isopentenyl diphosphate from 1-deoxy-D-xylulose 5-phosphate: step 4/6. In terms of biological role, involved in the biosynthesis of isopentenyl diphosphate (IPP) and dimethylallyl diphosphate (DMAPP), two major building blocks of isoprenoid compounds. Catalyzes the conversion of 4-diphosphocytidyl-2-C-methyl-D-erythritol 2-phosphate (CDP-ME2P) to 2-C-methyl-D-erythritol 2,4-cyclodiphosphate (ME-CPP) with a corresponding release of cytidine 5-monophosphate (CMP). This Salmonella typhimurium (strain LT2 / SGSC1412 / ATCC 700720) protein is 2-C-methyl-D-erythritol 2,4-cyclodiphosphate synthase.